A 59-amino-acid polypeptide reads, in one-letter code: Cecropin-A2 (59 aa).

The signal sequence occupies residues methionine 1–alanine 23.

The protein belongs to the cecropin family.

The protein localises to the secreted. In terms of biological role, cecropins have lytic and antibacterial activity against several Gram-positive and Gram-negative bacteria. The polypeptide is Cecropin-A2 (CECA2) (Aedes albopictus (Asian tiger mosquito)).